The chain runs to 231 residues: Acyl-protein thioesterase 2 (231 aa).

Residue Cys-2 is the site of S-palmitoyl cysteine attachment. Ser-82 is modified (phosphoserine). Residues Ser-122, Asp-176, and His-210 each act as charge relay system in the active site.

Belongs to the AB hydrolase superfamily. AB hydrolase 2 family. Expressed in various breast cancer cell lines.

It localises to the cytoplasm. The enzyme catalyses S-hexadecanoyl-L-cysteinyl-[protein] + H2O = L-cysteinyl-[protein] + hexadecanoate + H(+). It catalyses the reaction prostaglandin E2 1-glyceryl ester + H2O = prostaglandin E2 + glycerol + H(+). It carries out the reaction 1-hexadecanoyl-sn-glycero-3-phosphocholine + H2O = sn-glycerol 3-phosphocholine + hexadecanoate + H(+). The catalysed reaction is 1-octadecanoyl-sn-glycero-3-phosphocholine + H2O = octadecanoate + sn-glycerol 3-phosphocholine + H(+). The enzyme catalyses 1-hexadecanoyl-sn-glycero-3-phosphate + H2O = sn-glycerol 3-phosphate + hexadecanoate + H(+). It catalyses the reaction 1-hexadecanoyl-sn-glycero-3-phospho-L-serine + H2O = sn-glycero-3-phospho-L-serine + hexadecanoate + H(+). Its activity is regulated as follows. Inhibited by compound 1 or (5,5-Dioxido-4H-thieno[3,2-c]thiochromen-2-yl)(4-(4-methoxyphenyl)piperazin-1-yl)methanone. Functionally, acts as an acyl-protein thioesterase hydrolyzing fatty acids from S-acylated cysteine residues in proteins such as trimeric G alpha proteins, GSDMD, GAP43, ZDHHC6 or HRAS. Deacylates GAP43. Mediates depalmitoylation of ZDHHC6. Has lysophospholipase activity. Hydrolyzes prostaglandin glycerol esters (PG-Gs) in the following order prostaglandin D2-glycerol ester (PGD2-G) &gt; prostaglandin E2 glycerol ester (PGE2-G) &gt; prostaglandin F2-alpha-glycerol ester (PGF2-alpha-G). Hydrolyzes 1-arachidonoylglycerol but not 2-arachidonoylglycerol or arachidonoylethanolamide. The sequence is that of Acyl-protein thioesterase 2 (LYPLA2) from Homo sapiens (Human).